Reading from the N-terminus, the 154-residue chain is SsrA-binding protein (154 aa).

Positions 135-154 (KREDLKRRQDQRDMARAMKR) are disordered.

It belongs to the SmpB family.

The protein resides in the cytoplasm. In terms of biological role, required for rescue of stalled ribosomes mediated by trans-translation. Binds to transfer-messenger RNA (tmRNA), required for stable association of tmRNA with ribosomes. tmRNA and SmpB together mimic tRNA shape, replacing the anticodon stem-loop with SmpB. tmRNA is encoded by the ssrA gene; the 2 termini fold to resemble tRNA(Ala) and it encodes a 'tag peptide', a short internal open reading frame. During trans-translation Ala-aminoacylated tmRNA acts like a tRNA, entering the A-site of stalled ribosomes, displacing the stalled mRNA. The ribosome then switches to translate the ORF on the tmRNA; the nascent peptide is terminated with the 'tag peptide' encoded by the tmRNA and targeted for degradation. The ribosome is freed to recommence translation, which seems to be the essential function of trans-translation. The polypeptide is SsrA-binding protein (Microcystis aeruginosa (strain NIES-843 / IAM M-2473)).